Consider the following 139-residue polypeptide: Probable disulfide formation protein C 1 (139 aa).

The chain crosses the membrane as a helical span at residues 8-27; sequence EYALFTAWGASFIATLGSLY. The cysteines at positions 37 and 40 are disulfide-linked. 2 consecutive transmembrane segments (helical) span residues 42-61 and 68-85; these read YQRI…VVKK and YSLP…YHYV. A disulfide bridge links Cys99 with Cys104. A helical membrane pass occupies residues 113–135; that stretch reads GFVTIPFLALIGFITIAVCSFIV.

The protein belongs to the DsbB family. BdbC subfamily.

The protein resides in the cell membrane. Its function is as follows. Required for disulfide bond formation in some proteins. In Bacillus anthracis, this protein is Probable disulfide formation protein C 1 (bdbC1).